A 571-amino-acid chain; its full sequence is Apolipoprotein N-acyltransferase (571 aa).

6 helical membrane passes run 13–33 (VVLW…IALV), 51–68 (LYAA…GLRY), 72–92 (LMFL…VLFI), 118–138 (LVAA…FTGI), 152–172 (MLIQ…IVCV), and 199–219 (LVTA…SMNA). In terms of domain architecture, CN hydrolase spans 234-527 (NELTVYEQDI…SDVIYAQPRR (294 aa)). The active-site Proton acceptor is the Glu-275. The active site involves Lys-380. Cys-430 (nucleophile) is an active-site residue. A helical membrane pass occupies residues 542–562 (AGLMGAATLCGLAWMTFEWLM).

This sequence belongs to the CN hydrolase family. Apolipoprotein N-acyltransferase subfamily.

Its subcellular location is the cell inner membrane. It carries out the reaction N-terminal S-1,2-diacyl-sn-glyceryl-L-cysteinyl-[lipoprotein] + a glycerophospholipid = N-acyl-S-1,2-diacyl-sn-glyceryl-L-cysteinyl-[lipoprotein] + a 2-acyl-sn-glycero-3-phospholipid + H(+). The protein operates within protein modification; lipoprotein biosynthesis (N-acyl transfer). In terms of biological role, catalyzes the phospholipid dependent N-acylation of the N-terminal cysteine of apolipoprotein, the last step in lipoprotein maturation. This Rhodopirellula baltica (strain DSM 10527 / NCIMB 13988 / SH1) protein is Apolipoprotein N-acyltransferase.